Consider the following 335-residue polypeptide: Adenine deaminase (335 aa).

3 residues coordinate Zn(2+): histidine 17, histidine 19, and histidine 197. Glutamate 200 functions as the Proton donor in the catalytic mechanism. Zn(2+) is bound at residue aspartate 278. Aspartate 279 serves as a coordination point for substrate.

Belongs to the metallo-dependent hydrolases superfamily. Adenosine and AMP deaminases family. Adenine deaminase type 2 subfamily. The cofactor is Zn(2+).

It catalyses the reaction adenine + H2O + H(+) = hypoxanthine + NH4(+). In terms of biological role, catalyzes the hydrolytic deamination of adenine to hypoxanthine. Plays an important role in the purine salvage pathway and in nitrogen catabolism. The chain is Adenine deaminase from Marinomonas sp. (strain MWYL1).